The primary structure comprises 189 residues: UPF0200 protein Smar_1234 (189 aa).

Residue 10–17 (GMPGAGKS) participates in ATP binding.

It belongs to the UPF0200 family.

The polypeptide is UPF0200 protein Smar_1234 (Staphylothermus marinus (strain ATCC 43588 / DSM 3639 / JCM 9404 / F1)).